The chain runs to 266 residues: Small ribosomal subunit protein uS2 (266 aa).

This sequence belongs to the universal ribosomal protein uS2 family.

The chain is Small ribosomal subunit protein uS2 from Corynebacterium diphtheriae (strain ATCC 700971 / NCTC 13129 / Biotype gravis).